The chain runs to 134 residues: Cytochrome b5 isoform B (134 aa).

The Cytochrome b5 heme-binding domain maps to 5-81; it reads AKIFTLSEVS…MEQYYVGEID (77 aa). Heme is bound by residues histidine 40 and histidine 64. The helical transmembrane segment at 107-127 threads the bilayer; that stretch reads FIIKLLQFLVPLAILGLAVGI.

Belongs to the cytochrome b5 family. As to quaternary structure, interacts with CER1, FAH1, FAH2 and BI-1.

It localises to the endoplasmic reticulum membrane. Membrane bound hemoprotein which function as an electron carrier for several membrane bound oxygenases, including fatty acid desaturases. This chain is Cytochrome b5 isoform B, found in Arabidopsis thaliana (Mouse-ear cress).